We begin with the raw amino-acid sequence, 722 residues long: Polyribonucleotide nucleotidyltransferase (722 aa).

Mg(2+) is bound by residues D486 and D492. One can recognise a KH domain in the interval 553-612; it reads PKIVQLQIDIDKISLVIGSTGKTVKAITDEFEVKVQIEQNGKIILFGDDDFKMQKAKERI. The region spanning 622–717 is the S1 motif domain; it reads GEIYEGTVKK…KFGKIDLEIV (96 aa).

It belongs to the polyribonucleotide nucleotidyltransferase family. Requires Mg(2+) as cofactor.

Its subcellular location is the cytoplasm. The enzyme catalyses RNA(n+1) + phosphate = RNA(n) + a ribonucleoside 5'-diphosphate. In terms of biological role, involved in mRNA degradation. Catalyzes the phosphorolysis of single-stranded polyribonucleotides processively in the 3'- to 5'-direction. This is Polyribonucleotide nucleotidyltransferase from Borreliella burgdorferi (strain ZS7) (Borrelia burgdorferi).